Consider the following 223-residue polypeptide: Proteasome subunit beta (223 aa).

Residues 1–6 (MDTMKG) constitute a propeptide, removed in mature form; by autocatalysis. Residue T7 is the Nucleophile of the active site.

This sequence belongs to the peptidase T1B family. The 20S proteasome core is composed of 14 alpha and 14 beta subunits that assemble into four stacked heptameric rings, resulting in a barrel-shaped structure. The two inner rings, each composed of seven catalytic beta subunits, are sandwiched by two outer rings, each composed of seven alpha subunits. The catalytic chamber with the active sites is on the inside of the barrel. Has a gated structure, the ends of the cylinder being occluded by the N-termini of the alpha-subunits. Is capped at one or both ends by the proteasome regulatory ATPase, PAN.

Its subcellular location is the cytoplasm. The enzyme catalyses Cleavage of peptide bonds with very broad specificity.. The formation of the proteasomal ATPase PAN-20S proteasome complex, via the docking of the C-termini of PAN into the intersubunit pockets in the alpha-rings, triggers opening of the gate for substrate entry. Interconversion between the open-gate and close-gate conformations leads to a dynamic regulation of the 20S proteasome proteolysis activity. In terms of biological role, component of the proteasome core, a large protease complex with broad specificity involved in protein degradation. This Methanocaldococcus vulcanius (strain ATCC 700851 / DSM 12094 / M7) (Methanococcus vulcanius) protein is Proteasome subunit beta.